Reading from the N-terminus, the 303-residue chain is Putative S-adenosyl-L-methionine-dependent methyltransferase MAP_4197c (303 aa).

S-adenosyl-L-methionine contacts are provided by residues Asp129 and 158–159 (DL).

Belongs to the UPF0677 family.

Exhibits S-adenosyl-L-methionine-dependent methyltransferase activity. The sequence is that of Putative S-adenosyl-L-methionine-dependent methyltransferase MAP_4197c from Mycolicibacterium paratuberculosis (strain ATCC BAA-968 / K-10) (Mycobacterium paratuberculosis).